The sequence spans 1480 residues: Cystic fibrosis transmembrane conductance regulator (1480 aa).

At 1–77 (MQRSPLEKAS…KLINALRRCF (77 aa)) the chain is on the cytoplasmic side. The chain crosses the membrane as a helical span at residues 78–98 (FWRFMFYGIFLYLGEVTKAVQ). Residues 81–365 (FMFYGIFLYL…WAVQTWYDSL (285 aa)) enclose the ABC transmembrane type-1 1 domain. Residues 99–122 (PLLLGRIIASYDPDNKEERSIAIY) lie on the Extracellular side of the membrane. Residues 123–146 (LGIGLCLLFIVRTLLLHPAIFGLH) traverse the membrane as a helical segment. The Cytoplasmic portion of the chain corresponds to 147-195 (HIGMQMRIAMFSLIYKKTLKLSSRVLDKISIGQLVSLLSNNLNKFDEGL). Residues 196–216 (ALAHFVWIAPLQVALLMGLIW) form a helical membrane-spanning segment. Residues 217 to 222 (ELLQAS) are Extracellular-facing. Residues 223–243 (AFCGLGFLIVLALFQAGLGRM) form a helical membrane-spanning segment. Residues 244 to 298 (MMKYRDQRAGKISERLVITSEMIENIQSVKAYCWEEAMEKMIENLRQTELKLTRK) lie on the Cytoplasmic side of the membrane. Residues 299–319 (AAYVRYFNSSAFFFSGFFVVF) form a helical membrane-spanning segment. The Extracellular portion of the chain corresponds to 320–339 (LSVLPYALIKGIILRKIFTT). Residues 340–358 (ISFCIVLRMAVTRQFPWAV) form a helical membrane-spanning segment. Topologically, residues 359-858 (QTWYDSLGAI…YLRYITVHKS (500 aa)) are cytoplasmic. Residues Trp401, Ser434, 458 to 465 (GSTGAGKT), and Gln493 each bind ATP. An ABC transporter 1 domain is found at 423-646 (NGDDSLFFSN…RPDFSSKLMG (224 aa)). The S-palmitoyl cysteine moiety is linked to residue Cys524. Phosphoserine occurs at positions 549 and 660. The interval 654–831 (SAERRNSILT…EEINEEDLKE (178 aa)) is disordered R region. Residue Ser670 is modified to Phosphoserine; by PKA. Ser686 is modified (phosphoserine). Lys688 is covalently cross-linked (Glycyl lysine isopeptide (Lys-Gly) (interchain with G-Cter in ubiquitin)). A phosphoserine mark is found at Ser700 and Ser712. Phosphothreonine is present on Thr717. A phosphoserine mark is found at Ser737, Ser753, Ser768, Ser790, Ser795, and Ser813. Residues 859 to 879 (LIFVLIWCLVIFLAEVAASLV) traverse the membrane as a helical segment. An ABC transmembrane type-1 2 domain is found at 859–1155 (LIFVLIWCLV…AVNSSIDVDS (297 aa)). At 880–918 (VLWLLGNTPLQDKGNSTHSRNNSYAVIITSTSSYYVFYI) the chain is on the extracellular side. Asn894 and Asn900 each carry an N-linked (GlcNAc...) asparagine glycan. A discontinuously helical membrane pass occupies residues 919 to 939 (YVGVADTLLAMGFFRGLPLVH). Topologically, residues 940-990 (TLITVSKILHHKMLHSVLQAPMSTLNTLKAGGILNRFSKDIAILDDLLPLT) are cytoplasmic. The chain crosses the membrane as a helical span at residues 991-1011 (IFDFIQLLLIVIGAIAVVAVL). Residues 1012–1013 (QP) are Extracellular-facing. The helical transmembrane segment at 1014 to 1034 (YIFVATVPVIVAFIMLRAYFL) threads the bilayer. The Cytoplasmic segment spans residues 1035–1095 (QTSQQLKQLE…TANWFLYLST (61 aa)). Residues 1096-1116 (LRWFQMRIEMIFVIFFIAVTF) traverse the membrane as a helical segment. The Extracellular segment spans residues 1117-1130 (ISILTTGEGEGRVG). Residues 1131-1151 (IILTLAMNIMSTLQWAVNSSI) traverse the membrane as a helical segment. Over 1152-1480 (DVDSLMRSVS…TEEEVQDTRL (329 aa)) the chain is Cytoplasmic. In terms of domain architecture, ABC transporter 2 spans 1210-1443 (MTVKDLTAKY…RSLFRQAISP (234 aa)). ATP is bound by residues Tyr1219 and 1244–1251 (GRTGSGKS). The tract at residues 1386–1480 (RTLKQAFADC…TEEEVQDTRL (95 aa)) is interaction with GORASP2. Residue Cys1395 is the site of S-palmitoyl cysteine attachment. Phosphoserine is present on residues Ser1444 and Ser1456. The interval 1452–1480 (HRNSSKCKSKPQIAALKEETEEEVQDTRL) is disordered. Over residues 1470–1480 (ETEEEVQDTRL) the composition is skewed to acidic residues. The PDZ-binding signature appears at 1478–1480 (TRL).

It belongs to the ABC transporter superfamily. ABCC family. CFTR transporter (TC 3.A.1.202) subfamily. Monomer; does not require oligomerization for channel activity. May form oligomers in the membrane. Interacts with SLC26A3, SLC26A6 and NHERF1. Interacts with SHANK2. Interacts with MYO6. Interacts (via C-terminus) with GOPC (via PDZ domain); this promotes CFTR internalization and thereby decreases channel activity. Interacts with SLC4A7 through NHERF1. Found in a complex with MYO5B and RAB11A. Interacts with ANO1. Interacts with SLC26A8. Interacts with AHCYL1; the interaction increases CFTR activity. Interacts with CSE1L. The core-glycosylated form interacts with GORASP2 (via PDZ GRASP-type 1 domain) in respone to ER stress. Interacts with MARCHF2; the interaction leads to CFTR ubiqtuitination and degradation. Interacts with ADGRG2. In terms of processing, N-glycosylated. Post-translationally, phosphorylated; cAMP treatment promotes phosphorylation and activates the channel. Dephosphorylation decreases the ATPase activity (in vitro). Phosphorylation at PKA sites activates the channel. Phosphorylation at PKC sites enhances the response to phosphorylation by PKA. Phosphorylated by AMPK; this inhibits channel activity. Ubiquitinated, leading to its degradation in the lysosome. Deubiquitination by USP10 in early endosomes enhances its endocytic recycling to the cell membrane. Ubiquitinated by RNF185 during ER stress. Ubiquitinated by MARCHF2.

The protein localises to the apical cell membrane. It localises to the early endosome membrane. Its subcellular location is the cell membrane. It is found in the recycling endosome membrane. The protein resides in the endoplasmic reticulum membrane. The protein localises to the nucleus. It carries out the reaction ATP + H2O + closed Cl(-) channel = ADP + phosphate + open Cl(-) channel.. The catalysed reaction is chloride(in) = chloride(out). The enzyme catalyses hydrogencarbonate(in) = hydrogencarbonate(out). It catalyses the reaction ATP + H2O = ADP + phosphate + H(+). In terms of biological role, epithelial ion channel that plays an important role in the regulation of epithelial ion and water transport and fluid homeostasis. Mediates the transport of chloride ions across the cell membrane. Possesses an intrinsic ATPase activity and utilizes ATP to gate its channel; the passive flow of anions through the channel is gated by cycles of ATP binding and hydrolysis by the ATP-binding domains. The ion channel is also permeable to HCO(3)(-); selectivity depends on the extracellular chloride concentration. Exerts its function also by modulating the activity of other ion channels and transporters. Contributes to the regulation of the pH and the ion content of the epithelial fluid layer. Modulates the activity of the epithelial sodium channel (ENaC) complex, in part by regulating the cell surface expression of the ENaC complex. May regulate bicarbonate secretion and salvage in epithelial cells by regulating the transporter SLC4A7. Can inhibit the chloride channel activity of ANO1. Plays a role in the chloride and bicarbonate homeostasis during sperm epididymal maturation and capacitation. This is Cystic fibrosis transmembrane conductance regulator from Pan troglodytes (Chimpanzee).